Reading from the N-terminus, the 173-residue chain is Translation initiation factor IF-3 (173 aa).

This sequence belongs to the IF-3 family. Monomer.

The protein resides in the cytoplasm. In terms of biological role, IF-3 binds to the 30S ribosomal subunit and shifts the equilibrium between 70S ribosomes and their 50S and 30S subunits in favor of the free subunits, thus enhancing the availability of 30S subunits on which protein synthesis initiation begins. The polypeptide is Translation initiation factor IF-3 (Parvibaculum lavamentivorans (strain DS-1 / DSM 13023 / NCIMB 13966)).